Reading from the N-terminus, the 248-residue chain is 2,3-bisphosphoglycerate-dependent phosphoglycerate mutase (248 aa).

Substrate is bound by residues 8–15 (RHGESTWN), 21–22 (TG), arginine 60, 87–90 (ERHY), lysine 98, 114–115 (RR), and 183–184 (GN). The active-site Tele-phosphohistidine intermediate is histidine 9. Glutamate 87 (proton donor/acceptor) is an active-site residue.

Belongs to the phosphoglycerate mutase family. BPG-dependent PGAM subfamily.

The enzyme catalyses (2R)-2-phosphoglycerate = (2R)-3-phosphoglycerate. It functions in the pathway carbohydrate degradation; glycolysis; pyruvate from D-glyceraldehyde 3-phosphate: step 3/5. In terms of biological role, catalyzes the interconversion of 2-phosphoglycerate and 3-phosphoglycerate. The sequence is that of 2,3-bisphosphoglycerate-dependent phosphoglycerate mutase from Solibacter usitatus (strain Ellin6076).